The primary structure comprises 418 residues: Delta(14)-sterol reductase TM7SF2 (418 aa).

6 helical membrane passes run 13–35, 62–81, 102–124, 129–148, 255–277, and 287–304; these read FGGP…HLLL, ALLL…LLPA, GFQA…LPLG, MLLP…SLFL, FGFM…QAQF, and LPMA…YYIF. NADP(+) is bound by residues lysine 311, arginine 315, leucine 338, tryptophan 343, and 350–351; that span reads NY. A helical transmembrane segment spans residues 355–377; it reads LIMALAWSLPCGVSHLLPYFYLL. NADP(+) contacts are provided by residues aspartate 390, 394-398, and tyrosine 405; that span reads CLQKY.

Belongs to the ERG4/ERG24 family. Expressed in adult heart, brain, pancreas, lung, liver, skeletal muscle, kidney, ovary, prostate, testis and adrenal gland, but not detected in placenta, spleen, thymus, small intestine, colon (mucosal lining), or peripheral blood leukocytes.

It localises to the microsome membrane. The protein localises to the endoplasmic reticulum membrane. The catalysed reaction is 4,4-dimethyl-5alpha-cholesta-8,24-dien-3beta-ol + NADP(+) = 4,4-dimethyl-5alpha-cholesta-8,14,24-trien-3beta-ol + NADPH + H(+). It carries out the reaction 5alpha-cholest-8,14-dien-3beta-ol + NADPH + H(+) = 5alpha-cholest-8-en-3beta-ol + NADP(+). The enzyme catalyses 4,4-dimethyl-8,14-cholestadien-3beta-ol + NADPH + H(+) = 4,4-dimethyl-5alpha-cholest-8-en-3beta-ol + NADP(+). It participates in steroid biosynthesis; cholesterol biosynthesis. In terms of biological role, catalyzes the reduction of the C14-unsaturated bond of lanosterol, as part of the metabolic pathway leading to cholesterol biosynthesis. This chain is Delta(14)-sterol reductase TM7SF2 (TM7SF2), found in Homo sapiens (Human).